We begin with the raw amino-acid sequence, 292 residues long: D-galactarolactone isomerase (292 aa).

Belongs to the metallo-dependent hydrolases superfamily. It depends on Does not require a metal cofactor. as a cofactor.

The enzyme catalyses D-galactaro-1,5-lactone = D-galactaro-1,4-lactone. It participates in carbohydrate acid metabolism; D-galacturonate degradation via prokaryotic oxidative pathway. Catalyzes the isomerization of D-galactaro-1,5-lactone to D-galactaro-1,4-lactone. This is a step in the oxidative degradation pathway of D-galacturonate, which allows A.tumefaciens to utilize D-galacturonate as a sole carbon source. The protein is D-galactarolactone isomerase of Agrobacterium fabrum (strain C58 / ATCC 33970) (Agrobacterium tumefaciens (strain C58)).